Here is a 418-residue protein sequence, read N- to C-terminus: cAMP-dependent protein kinase type II-beta regulatory subunit (418 aa).

The interval serine 2–leucine 153 is dimerization and phosphorylation. Residues threonine 48–threonine 57 show a composition bias toward basic and acidic residues. Residues threonine 48–alanine 96 are disordered. Phosphothreonine is present on threonine 69. 3 positions are modified to phosphoserine: serine 83, serine 85, and serine 114. Residues aspartate 84–alanine 94 are compositionally biased toward acidic residues. 3',5'-cyclic AMP is bound by residues leucine 154–proline 275, glutamate 223, arginine 232, phenylalanine 276–alanine 418, glutamate 352, and arginine 361.

The protein belongs to the cAMP-dependent kinase regulatory chain family. The inactive form of the enzyme is composed of two regulatory chains and two catalytic chains. Activation by cAMP produces two active catalytic monomers and a regulatory dimer that binds four cAMP molecules. Interacts with PRKACA and PRKACB. Interacts with the phosphorylated form of PJA2. Forms a complex composed of PRKAR2B, GSK3B and GSKIP through GSKIP interaction; facilitates PKA-induced phosphorylation and regulates GSK3B activity. Post-translationally, phosphorylated by the activated catalytic chain. In terms of tissue distribution, four types of regulatory chains are found: I-alpha, I-beta, II-alpha, and II-beta. Their expression varies among tissues and is in some cases constitutive and in others inducible.

Its subcellular location is the cytoplasm. The protein resides in the cell membrane. In terms of biological role, regulatory subunit of the cAMP-dependent protein kinases involved in cAMP signaling in cells. Type II regulatory chains mediate membrane association by binding to anchoring proteins, including the MAP2 kinase. This is cAMP-dependent protein kinase type II-beta regulatory subunit (PRKAR2B) from Homo sapiens (Human).